The following is a 125-amino-acid chain: Large ribosomal subunit protein bL12 (125 aa).

This sequence belongs to the bacterial ribosomal protein bL12 family. As to quaternary structure, homodimer. Part of the ribosomal stalk of the 50S ribosomal subunit. Forms a multimeric L10(L12)X complex, where L10 forms an elongated spine to which 2 to 4 L12 dimers bind in a sequential fashion. Binds GTP-bound translation factors.

Its function is as follows. Forms part of the ribosomal stalk which helps the ribosome interact with GTP-bound translation factors. Is thus essential for accurate translation. This chain is Large ribosomal subunit protein bL12, found in Francisella tularensis subsp. tularensis (strain SCHU S4 / Schu 4).